A 251-amino-acid polypeptide reads, in one-letter code: DNA-directed RNA polymerase III subunit RPC7 (251 aa).

The tract at residues 186–251 is disordered; that stretch reads DDASTGDGAA…EEDPNEEAAF (66 aa). Serine 189 bears the Phosphoserine mark. 2 stretches are compositionally biased toward acidic residues: residues 203-225 and 234-251; these read GEDD…DDDY and GDDD…EAAF.

It belongs to the eukaryotic RPC7 RNA polymerase subunit family. In terms of assembly, component of the RNA polymerase III (Pol III) complex consisting of 17 subunits.

The protein localises to the nucleus. In terms of biological role, DNA-dependent RNA polymerase catalyzes the transcription of DNA into RNA using the four ribonucleoside triphosphates as substrates. Specific peripheric component of RNA polymerase III which synthesizes small RNAs, such as 5S rRNA and tRNAs. C31 is involved in the formation of the initiation complex. The polypeptide is DNA-directed RNA polymerase III subunit RPC7 (RPC31) (Saccharomyces cerevisiae (strain ATCC 204508 / S288c) (Baker's yeast)).